A 318-amino-acid chain; its full sequence is Acetyl-coenzyme A carboxylase carboxyl transferase subunit alpha (318 aa).

Positions 32-293 constitute a CoA carboxyltransferase C-terminal domain; sequence NINEEIQRLE…REALREEWAR (262 aa).

Belongs to the AccA family. In terms of assembly, acetyl-CoA carboxylase is a heterohexamer composed of biotin carboxyl carrier protein (AccB), biotin carboxylase (AccC) and two subunits each of ACCase subunit alpha (AccA) and ACCase subunit beta (AccD).

It is found in the cytoplasm. The enzyme catalyses N(6)-carboxybiotinyl-L-lysyl-[protein] + acetyl-CoA = N(6)-biotinyl-L-lysyl-[protein] + malonyl-CoA. It functions in the pathway lipid metabolism; malonyl-CoA biosynthesis; malonyl-CoA from acetyl-CoA: step 1/1. In terms of biological role, component of the acetyl coenzyme A carboxylase (ACC) complex. First, biotin carboxylase catalyzes the carboxylation of biotin on its carrier protein (BCCP) and then the CO(2) group is transferred by the carboxyltransferase to acetyl-CoA to form malonyl-CoA. In Halorhodospira halophila (strain DSM 244 / SL1) (Ectothiorhodospira halophila (strain DSM 244 / SL1)), this protein is Acetyl-coenzyme A carboxylase carboxyl transferase subunit alpha.